Consider the following 132-residue polypeptide: Interferon-induced transmembrane protein 5 (132 aa).

Over residues 1–11 (MDTAYPREDTR) the composition is skewed to basic and acidic residues. A disordered region spans residues 1–21 (MDTAYPREDTRAPTPSKAGAH). The Extracellular segment spans residues 1–36 (MDTAYPREDTRAPTPSKAGAHTALTLGAPHPPPRDH). A helical membrane pass occupies residues 37–57 (LIWSVFSTLYLNLCCLGFLAL). S-palmitoyl cysteine attachment occurs at residues cysteine 50, cysteine 51, and cysteine 84. Over 58 to 86 (AYSIKARDQKVVGDLEAARRFGSKAKCYN) the chain is Cytoplasmic. The helical transmembrane segment at 87 to 107 (ILAAMWTLVPPLLLLGLVVTG) threads the bilayer. The Extracellular segment spans residues 108–132 (ALHLARLAKDSAAFFSTKFDDADYD).

It belongs to the CD225/Dispanin family. In terms of assembly, interacts with FKBP11. Post-translationally, palmitoylated. As to expression, detected in osteoblasts and fibroblasts (at protein level). Detected in bone.

It localises to the cell membrane. In terms of biological role, required for normal bone mineralization. The protein is Interferon-induced transmembrane protein 5 (IFITM5) of Homo sapiens (Human).